We begin with the raw amino-acid sequence, 231 residues long: Adenylate kinase (231 aa).

Position 12-17 (12-17 (GAGKGT)) interacts with ATP. The tract at residues 32-61 (STGDMLRAAVKAKTPLGLEVKKIMESGGLV) is NMP. AMP is bound by residues Thr33, Arg38, 59 to 61 (GLV), 87 to 90 (GFPR), and Gln94. The interval 124-161 (GRLIHPASGRTYHRRYNPPKVADKDDVTGEPLIQRADD) is LID. ATP contacts are provided by residues Arg125 and 134–135 (TY). AMP contacts are provided by Arg158 and Arg169. Gly205 serves as a coordination point for ATP.

This sequence belongs to the adenylate kinase family. Monomer.

Its subcellular location is the cytoplasm. It catalyses the reaction AMP + ATP = 2 ADP. It participates in purine metabolism; AMP biosynthesis via salvage pathway; AMP from ADP: step 1/1. Its function is as follows. Catalyzes the reversible transfer of the terminal phosphate group between ATP and AMP. Plays an important role in cellular energy homeostasis and in adenine nucleotide metabolism. The sequence is that of Adenylate kinase from Coxiella burnetii (strain CbuK_Q154) (Coxiella burnetii (strain Q154)).